The following is a 444-amino-acid chain: Glutamate-1-semialdehyde 2,1-aminomutase (444 aa).

K267 is subject to N6-(pyridoxal phosphate)lysine.

This sequence belongs to the class-III pyridoxal-phosphate-dependent aminotransferase family. HemL subfamily. In terms of assembly, homodimer. Pyridoxal 5'-phosphate serves as cofactor.

It localises to the cytoplasm. The enzyme catalyses (S)-4-amino-5-oxopentanoate = 5-aminolevulinate. Its pathway is porphyrin-containing compound metabolism; protoporphyrin-IX biosynthesis; 5-aminolevulinate from L-glutamyl-tRNA(Glu): step 2/2. This Xylella fastidiosa (strain M12) protein is Glutamate-1-semialdehyde 2,1-aminomutase.